We begin with the raw amino-acid sequence, 493 residues long: Catalase A (493 aa).

The segment at 1-24 (MKRKLTGLFGAPVSDRENSMTAGP) is disordered. Active-site residues include H53 and N126. Y336 contributes to the heme binding site.

Belongs to the catalase family. In terms of assembly, homodimer. It depends on heme as a cofactor.

It carries out the reaction 2 H2O2 = O2 + 2 H2O. In terms of biological role, decomposes hydrogen peroxide into water and oxygen; serves to protect cells from the toxic effects of hydrogen peroxide. The sequence is that of Catalase A (katA) from Staphylococcus xylosus.